A 326-amino-acid chain; its full sequence is Pyruvate dehydrogenase E1 component subunit alpha (326 aa).

In terms of assembly, heterodimer of an alpha and a beta chain. The cofactor is thiamine diphosphate.

The enzyme catalyses N(6)-[(R)-lipoyl]-L-lysyl-[protein] + pyruvate + H(+) = N(6)-[(R)-S(8)-acetyldihydrolipoyl]-L-lysyl-[protein] + CO2. In terms of biological role, the pyruvate dehydrogenase complex catalyzes the overall conversion of pyruvate to acetyl-CoA and CO(2). It contains multiple copies of three enzymatic components: pyruvate dehydrogenase (E1), dihydrolipoamide acetyltransferase (E2) and lipoamide dehydrogenase (E3). The sequence is that of Pyruvate dehydrogenase E1 component subunit alpha (pdhA) from Rickettsia felis (strain ATCC VR-1525 / URRWXCal2) (Rickettsia azadi).